The sequence spans 443 residues: Protein UIP5 (443 aa).

Positions 1–27 (MSRDVRAEKLAISLLILSLFLIFQLVA) are cleaved as a signal peptide. Over 28-398 (EIYLNNGDQY…LFKVVLTIWH (371 aa)) the chain is Perinuclear space. The helical transmembrane segment at 399 to 420 (YSEILLLIMGIYLFSACIRVFQ) threads the bilayer. The Cytoplasmic segment spans residues 421–443 (RRFKKIRSRRKRAGSHSVGLLPM).

The protein localises to the nucleus membrane. The protein is Protein UIP5 (UIP5) of Saccharomyces cerevisiae (strain ATCC 204508 / S288c) (Baker's yeast).